A 393-amino-acid polypeptide reads, in one-letter code: Putative F-box protein At1g55070 (393 aa).

The region spanning 29-74 (GEYFDRIPADLVIKILSKLSAKSMAKCRCVCKLLSSIIRQPNYNQL) is the F-box domain.

The sequence is that of Putative F-box protein At1g55070 from Arabidopsis thaliana (Mouse-ear cress).